The following is a 673-amino-acid chain: UvrABC system protein B (673 aa).

The region spanning 26–183 (EGLEDGLAHQ…RRLAELQYAR (158 aa)) is the Helicase ATP-binding domain. 39–46 (GVTGSGKT) serves as a coordination point for ATP. Positions 92-115 (YYDYYQPEAYVPSSDTFIEKDASV) match the Beta-hairpin motif. The region spanning 431–597 (QVDDLLSEIR…GLNKKVVDIL (167 aa)) is the Helicase C-terminal domain. The interval 608-627 (AKGRGKSRPIVEPDNVPMDM) is disordered. Residues 633-668 (QQKIHELEGLMMQHAQNLEFEEAAQIRDQLHQLRDL) form the UVR domain.

It belongs to the UvrB family. In terms of assembly, forms a heterotetramer with UvrA during the search for lesions. Interacts with UvrC in an incision complex.

Its subcellular location is the cytoplasm. In terms of biological role, the UvrABC repair system catalyzes the recognition and processing of DNA lesions. A damage recognition complex composed of 2 UvrA and 2 UvrB subunits scans DNA for abnormalities. Upon binding of the UvrA(2)B(2) complex to a putative damaged site, the DNA wraps around one UvrB monomer. DNA wrap is dependent on ATP binding by UvrB and probably causes local melting of the DNA helix, facilitating insertion of UvrB beta-hairpin between the DNA strands. Then UvrB probes one DNA strand for the presence of a lesion. If a lesion is found the UvrA subunits dissociate and the UvrB-DNA preincision complex is formed. This complex is subsequently bound by UvrC and the second UvrB is released. If no lesion is found, the DNA wraps around the other UvrB subunit that will check the other stand for damage. The sequence is that of UvrABC system protein B from Escherichia coli O7:K1 (strain IAI39 / ExPEC).